The following is a 308-amino-acid chain: 1D-myo-inositol 2-acetamido-2-deoxy-alpha-D-glucopyranoside deacetylase (308 aa).

Positions 37, 40, and 171 each coordinate Zn(2+).

This sequence belongs to the MshB deacetylase family. Zn(2+) serves as cofactor.

It catalyses the reaction 1D-myo-inositol 2-acetamido-2-deoxy-alpha-D-glucopyranoside + H2O = 1D-myo-inositol 2-amino-2-deoxy-alpha-D-glucopyranoside + acetate. Functionally, catalyzes the deacetylation of 1D-myo-inositol 2-acetamido-2-deoxy-alpha-D-glucopyranoside (GlcNAc-Ins) in the mycothiol biosynthesis pathway. In Mycobacterium sp. (strain JLS), this protein is 1D-myo-inositol 2-acetamido-2-deoxy-alpha-D-glucopyranoside deacetylase.